A 339-amino-acid chain; its full sequence is 1-aminocyclopropane-1-carboxylate deaminase (339 aa).

Position 52 is an N6-(pyridoxal phosphate)lysine (lysine 52). Catalysis depends on serine 79, which acts as the Nucleophile.

This sequence belongs to the ACC deaminase/D-cysteine desulfhydrase family. As to quaternary structure, homotrimer. It depends on pyridoxal 5'-phosphate as a cofactor.

The catalysed reaction is 1-aminocyclopropane-1-carboxylate + H2O = 2-oxobutanoate + NH4(+). Catalyzes a cyclopropane ring-opening reaction, the irreversible conversion of 1-aminocyclopropane-1-carboxylate (ACC) to ammonia and alpha-ketobutyrate. Allows growth on ACC as a nitrogen source. This is 1-aminocyclopropane-1-carboxylate deaminase from Bradyrhizobium sp. (strain BTAi1 / ATCC BAA-1182).